A 100-amino-acid chain; its full sequence is uncharacterized protein (100 aa).

May interact with ribosomes.

This is an uncharacterized protein from Saccharomyces cerevisiae (strain ATCC 204508 / S288c) (Baker's yeast).